Consider the following 181-residue polypeptide: Protein Syd (181 aa).

This sequence belongs to the Syd family.

It localises to the cell inner membrane. Its function is as follows. Interacts with the SecY protein in vivo. May bind preferentially to an uncomplexed state of SecY, thus functioning either as a chelating agent for excess SecY in the cell or as a regulatory factor that negatively controls the translocase function. The polypeptide is Protein Syd (Klebsiella pneumoniae (strain 342)).